We begin with the raw amino-acid sequence, 157 residues long: Ribonuclease H (157 aa).

In terms of domain architecture, RNase H type-1 spans 3–144 (NSKTVHLYTD…CDELARDAAT (142 aa)). Residues aspartate 12, glutamate 50, aspartate 72, and aspartate 136 each contribute to the Mg(2+) site.

This sequence belongs to the RNase H family. Monomer. Mg(2+) is required as a cofactor.

Its subcellular location is the cytoplasm. The catalysed reaction is Endonucleolytic cleavage to 5'-phosphomonoester.. In terms of biological role, endonuclease that specifically degrades the RNA of RNA-DNA hybrids. The polypeptide is Ribonuclease H (Idiomarina loihiensis (strain ATCC BAA-735 / DSM 15497 / L2-TR)).